Reading from the N-terminus, the 1453-residue chain is Scavenger receptor cysteine-rich type 1 protein M160 (1453 aa).

A signal peptide spans 1 to 40 (MMLPQNSWHIDFGRCCCHQNLFSAVVTCILLLNSCFLISS). The Extracellular segment spans residues 41 to 1359 (FNGTDLELRL…LKSLNASSGH (1319 aa)). Residues asparagine 42, asparagine 78, asparagine 120, and asparagine 161 are each glycosylated (N-linked (GlcNAc...) asparagine). SRCR domains are found at residues 48 to 148 (LRLV…VNCY), 155 to 255 (LRLV…LTCY), 262 to 362 (LRLV…VICS), 369 to 469 (LRLA…VICS), 476 to 576 (LRLV…VTCS), 583 to 683 (LRLV…VICS), 690 to 790 (LRLV…LICS), 795 to 895 (PRLV…VVCS), and 900 to 1000 (VRLV…VICT). Intrachain disulfides connect cysteine 73-cysteine 137, cysteine 86-cysteine 147, and cysteine 117-cysteine 127. Cystine bridges form between cysteine 180-cysteine 244, cysteine 193-cysteine 254, cysteine 224-cysteine 234, cysteine 287-cysteine 351, cysteine 300-cysteine 361, and cysteine 331-cysteine 341. N-linked (GlcNAc...) asparagine glycosylation is found at asparagine 334, asparagine 377, asparagine 441, asparagine 548, and asparagine 637. 18 cysteine pairs are disulfide-bonded: cysteine 394–cysteine 458, cysteine 407–cysteine 468, cysteine 438–cysteine 448, cysteine 501–cysteine 565, cysteine 514–cysteine 575, cysteine 545–cysteine 555, cysteine 608–cysteine 672, cysteine 621–cysteine 682, cysteine 652–cysteine 662, cysteine 715–cysteine 779, cysteine 728–cysteine 789, cysteine 759–cysteine 769, cysteine 820–cysteine 884, cysteine 833–cysteine 894, cysteine 864–cysteine 874, cysteine 925–cysteine 989, cysteine 938–cysteine 999, and cysteine 969–cysteine 979. N-linked (GlcNAc...) asparagine glycans are attached at residues asparagine 972, asparagine 1013, asparagine 1084, and asparagine 1104. SRCR domains lie at 1036–1136 (LRLV…VICS), 1141–1243 (LRLY…ITCE), and 1246–1346 (IRVR…VRCS). Disulfide bonds link cysteine 1061–cysteine 1125, cysteine 1074–cysteine 1135, and cysteine 1105–cysteine 1115. 2 N-linked (GlcNAc...) asparagine glycosylation sites follow: asparagine 1161 and asparagine 1171. 5 disulfide bridges follow: cysteine 1181–cysteine 1242, cysteine 1212–cysteine 1222, cysteine 1271–cysteine 1335, cysteine 1284–cysteine 1345, and cysteine 1315–cysteine 1325. 2 N-linked (GlcNAc...) asparagine glycosylation sites follow: asparagine 1318 and asparagine 1354. Residues 1360 to 1380 (LALILSSIFGLLLLVLFILFL) form a helical membrane-spanning segment. The Cytoplasmic portion of the chain corresponds to 1381-1453 (TWCRVQKQKH…GVLPASEATK (73 aa)). Basic and acidic residues predominate over residues 1418–1435 (EDPHGTRTSDDTPNHGCE). The segment at 1418–1453 (EDPHGTRTSDDTPNHGCEDASDTSLLGVLPASEATK) is disordered.

In terms of tissue distribution, isoform 1 is highly expressed in the spleen, lymph nodes, thymus, and fetal liver and weakly expressed in bone marrow and no expression was found in peripheral blood leukocytes. Isoform 1 expression is restricted to the monocyte and macrophage cell lines. Isoform 2 is only expressed in spleen.

Its subcellular location is the cell membrane. The protein resides in the secreted. The protein is Scavenger receptor cysteine-rich type 1 protein M160 (CD163L1) of Homo sapiens (Human).